The primary structure comprises 423 residues: Histidine--tRNA ligase (423 aa).

The protein belongs to the class-II aminoacyl-tRNA synthetase family. As to quaternary structure, homodimer.

It localises to the cytoplasm. It catalyses the reaction tRNA(His) + L-histidine + ATP = L-histidyl-tRNA(His) + AMP + diphosphate + H(+). This is Histidine--tRNA ligase from Orientia tsutsugamushi (strain Ikeda) (Rickettsia tsutsugamushi).